The chain runs to 538 residues: Calcium-dependent protein kinase 8 (538 aa).

The tract at residues 1-26 is disordered; it reads MGNCCGTPATAEEGGKRRRRGKQKKA. G2 carries the N-myristoyl glycine lipid modification. The segment covering 16-25 has biased composition (basic residues); it reads KRRRRGKQKK. The Protein kinase domain maps to 64–322; the sequence is YELGGELGRG…AEQVLEHPWL (259 aa). Residues 70 to 78 and K93 each bind ATP; that span reads LGRGEFGIT. D188 acts as the Proton acceptor in catalysis. The tract at residues 328-358 is autoinhibitory domain; that stretch reads MPDIPLGDAVRARLQQFAAMNKLKKKALKVI. 4 consecutive EF-hand domains span residues 365–400, 401–436, 437–472, and 473–508; these read EEAA…LGNQ, MPDS…VRKI, GNDE…EIDG, and NDED…GTDW. Residues D378, S380, N382, Q384, D389, D414, D416, N418, E425, D450, N452, S454, Y456, E461, D486, D488, D490, K492, and E497 each coordinate Ca(2+).

It belongs to the protein kinase superfamily. Ser/Thr protein kinase family. CDPK subfamily.

The protein localises to the membrane. It catalyses the reaction L-seryl-[protein] + ATP = O-phospho-L-seryl-[protein] + ADP + H(+). The catalysed reaction is L-threonyl-[protein] + ATP = O-phospho-L-threonyl-[protein] + ADP + H(+). With respect to regulation, activated by calcium. Autophosphorylation may play an important role in the regulation of the kinase activity. Functionally, may play a role in signal transduction pathways that involve calcium as a second messenger. The protein is Calcium-dependent protein kinase 8 of Oryza sativa subsp. japonica (Rice).